The chain runs to 114 residues: UPF0342 protein LVIS_1488 (114 aa).

Belongs to the UPF0342 family.

The polypeptide is UPF0342 protein LVIS_1488 (Levilactobacillus brevis (strain ATCC 367 / BCRC 12310 / CIP 105137 / JCM 1170 / LMG 11437 / NCIMB 947 / NCTC 947) (Lactobacillus brevis)).